A 293-amino-acid polypeptide reads, in one-letter code: Histamine N-methyltransferase A (293 aa).

Residue Glu-28 participates in substrate binding. Residues Gly-60, Glu-89, Gln-94, Ser-120, and Ile-142 each contribute to the S-adenosyl-L-methionine site. Asn-283 serves as a coordination point for substrate.

This sequence belongs to the class I-like SAM-binding methyltransferase superfamily. HNMT family. Monomer.

Its subcellular location is the cytoplasm. It carries out the reaction histamine + S-adenosyl-L-methionine = N(tau)-methylhistamine + S-adenosyl-L-homocysteine + H(+). Inactivates histamine by N-methylation. Plays an important role in degrading histamine and in regulating the airway response to histamine. The sequence is that of Histamine N-methyltransferase A (hnmt-a) from Xenopus laevis (African clawed frog).